Here is a 466-residue protein sequence, read N- to C-terminus: MTPPRKLHIKSYGCQMNVYDAQRMVDTLGAEGFVETAEAGDADLVILNTCHIREKASEKVYSELGRLRVAKEEAARQGRAMQIAVAGCVAQAEGAEIVTRAPTVDVVVGPQSYHHLPELLARAGRGEPAIETEFPAEDKFGFLARPSREAIRARGVSAFVTVQEGCDKFCTFCVVPYTRGSEMSRPVARILDEVTRLTENGVREITLIGQNVNAYHGEAPDGSTWTLGRLLYGIAEIPGVARIRYSTSHPNDVDDSLIAAHRDLASVMPFVHLPVQSGSDRILGLMNRKHGASDYRKVVDRFRAARPDIAFSSDFIVGFPGETEEDFRATLALIAQIGYAAAYSFKYSPRPGTPAADMQEMVSATEMDERLERLQSLIDSQQAAFNKAAIGTVVDVLFERAARKPGQLVGRTAYLQPAHVMAPDNIIGQVLPVRIDSLERYSLLGELVATAAPVAGAATPLVSIGG.

An MTTase N-terminal domain is found at 5-125 (RKLHIKSYGC…LPELLARAGR (121 aa)). Positions 14, 50, 88, 166, 170, and 173 each coordinate [4Fe-4S] cluster. The Radical SAM core domain occupies 152 to 384 (RARGVSAFVT…QSLIDSQQAA (233 aa)). One can recognise a TRAM domain in the interval 387 to 449 (KAAIGTVVDV…RYSLLGELVA (63 aa)).

This sequence belongs to the methylthiotransferase family. MiaB subfamily. Monomer. The cofactor is [4Fe-4S] cluster.

Its subcellular location is the cytoplasm. It catalyses the reaction N(6)-dimethylallyladenosine(37) in tRNA + (sulfur carrier)-SH + AH2 + 2 S-adenosyl-L-methionine = 2-methylsulfanyl-N(6)-dimethylallyladenosine(37) in tRNA + (sulfur carrier)-H + 5'-deoxyadenosine + L-methionine + A + S-adenosyl-L-homocysteine + 2 H(+). Catalyzes the methylthiolation of N6-(dimethylallyl)adenosine (i(6)A), leading to the formation of 2-methylthio-N6-(dimethylallyl)adenosine (ms(2)i(6)A) at position 37 in tRNAs that read codons beginning with uridine. The sequence is that of tRNA-2-methylthio-N(6)-dimethylallyladenosine synthase from Bradyrhizobium sp. (strain BTAi1 / ATCC BAA-1182).